A 248-amino-acid polypeptide reads, in one-letter code: Large ribosomal subunit protein uL30 (248 aa).

Positions 22 to 42 (KSQEKARAERQAEIEKKKAAN) are disordered. The span at 24 to 42 (QEKARAERQAEIEKKKAAN) shows a compositional bias: basic and acidic residues.

This sequence belongs to the universal ribosomal protein uL30 family. In terms of assembly, component of the large ribosomal subunit (LSU). Mature N.crassa ribosomes consist of a small (40S) and a large (60S) subunit. The 40S small subunit contains 1 molecule of ribosomal RNA (18S rRNA) and at least 32 different proteins. The large 60S subunit contains 3 rRNA molecules (26S, 5.8S and 5S rRNA) and at least 42 different proteins.

The protein localises to the cytoplasm. Functionally, component of the ribosome, a large ribonucleoprotein complex responsible for the synthesis of proteins in the cell. The small ribosomal subunit (SSU) binds messenger RNAs (mRNAs) and translates the encoded message by selecting cognate aminoacyl-transfer RNA (tRNA) molecules. The large subunit (LSU) contains the ribosomal catalytic site termed the peptidyl transferase center (PTC), which catalyzes the formation of peptide bonds, thereby polymerizing the amino acids delivered by tRNAs into a polypeptide chain. The nascent polypeptides leave the ribosome through a tunnel in the LSU and interact with protein factors that function in enzymatic processing, targeting, and the membrane insertion of nascent chains at the exit of the ribosomal tunnel. This is Large ribosomal subunit protein uL30 (rpl-7) from Neurospora crassa (strain ATCC 24698 / 74-OR23-1A / CBS 708.71 / DSM 1257 / FGSC 987).